The following is a 98-amino-acid chain: DNA-binding protein Fis (98 aa).

Positions 74 to 93 form a DNA-binding region, H-T-H motif; it reads QTRAAQMMGINRGTLRKKLK.

Belongs to the transcriptional regulatory Fis family. As to quaternary structure, homodimer.

Its function is as follows. Activates ribosomal RNA transcription. Plays a direct role in upstream activation of rRNA promoters. The polypeptide is DNA-binding protein Fis (Proteus hauseri).